Consider the following 243-residue polypeptide: Orotidine 5'-phosphate decarboxylase (243 aa).

Residues Asp18, Lys39, 66–75 (DLKFHDIPAT), Thr130, Arg192, Gln201, Gly221, and Arg222 contribute to the substrate site. The Proton donor role is filled by Lys68.

It belongs to the OMP decarboxylase family. Type 1 subfamily. In terms of assembly, homodimer.

The enzyme catalyses orotidine 5'-phosphate + H(+) = UMP + CO2. It participates in pyrimidine metabolism; UMP biosynthesis via de novo pathway; UMP from orotate: step 2/2. Functionally, catalyzes the decarboxylation of orotidine 5'-monophosphate (OMP) to uridine 5'-monophosphate (UMP). In Synechococcus sp. (strain CC9902), this protein is Orotidine 5'-phosphate decarboxylase.